We begin with the raw amino-acid sequence, 355 residues long: Guanine nucleotide-binding protein G(i) subunit alpha-2 (355 aa).

Residue Gly2 is the site of N-myristoyl glycine attachment. Residue Cys3 is the site of S-palmitoyl cysteine attachment. Positions 32 to 355 (REVKLLLLGA…KNNLKDCGLF (324 aa)) constitute a G-alpha domain. A G1 motif region spans residues 35–48 (KLLLLGAGESGKST). Residues 40–47 (GAGESGKS), 176–182 (LRTRVKT), 201–205 (DVGGQ), 270–273 (NKKD), and Ala327 each bind GTP. Mg(2+) is bound by residues Ser47 and Thr182. A G2 motif region spans residues 174 to 182 (DVLRTRVKT). Positions 197 to 206 (FKMFDVGGQR) are G3 motif. The G4 motif stretch occupies residues 266–273 (ILFLNKKD). The segment at 325–330 (TCATDT) is G5 motif.

Belongs to the G-alpha family. G(i/o/t/z) subfamily. G proteins are composed of 3 units; alpha, beta and gamma. The alpha chain contains the guanine nucleotide binding site. In this context, interacts with GNB2. Interacts with UNC5B. Interacts with GPSM1. Interacts with RGS12 and RGS14. Interacts (inactive GDP-bound form) with NUCB1 (via GBA motif); the interaction leads to activation of GNAI3. Interacts (inactive GDP-bound form) with CCDC88C/DAPLE (via GBA motif). Interacts (inactive GDP-bound form) with CCDC8A/GIV (via GBA motif). Interacts with CXCR1 and CXCR2.

Its subcellular location is the cytoplasm. It is found in the cytoskeleton. The protein resides in the microtubule organizing center. The protein localises to the centrosome. It localises to the cell membrane. Its subcellular location is the membrane. In terms of biological role, guanine nucleotide-binding proteins (G proteins) are involved as modulators or transducers in various transmembrane signaling systems. The G(i) proteins are involved in hormonal regulation of adenylate cyclase: they inhibit the cyclase in response to beta-adrenergic stimuli. May play a role in cell division. The protein is Guanine nucleotide-binding protein G(i) subunit alpha-2 (GNAI2) of Canis lupus familiaris (Dog).